A 369-amino-acid polypeptide reads, in one-letter code: tRNA/tmRNA (uracil-C(5))-methyltransferase (369 aa).

5 residues coordinate S-adenosyl-L-methionine: Q190, Y218, N223, E239, and D301. C326 functions as the Nucleophile in the catalytic mechanism. E360 serves as the catalytic Proton acceptor.

Belongs to the class I-like SAM-binding methyltransferase superfamily. RNA M5U methyltransferase family. TrmA subfamily.

The catalysed reaction is uridine(54) in tRNA + S-adenosyl-L-methionine = 5-methyluridine(54) in tRNA + S-adenosyl-L-homocysteine + H(+). It carries out the reaction uridine(341) in tmRNA + S-adenosyl-L-methionine = 5-methyluridine(341) in tmRNA + S-adenosyl-L-homocysteine + H(+). In terms of biological role, dual-specificity methyltransferase that catalyzes the formation of 5-methyluridine at position 54 (m5U54) in all tRNAs, and that of position 341 (m5U341) in tmRNA (transfer-mRNA). The polypeptide is tRNA/tmRNA (uracil-C(5))-methyltransferase (Vibrio atlanticus (strain LGP32) (Vibrio splendidus (strain Mel32))).